Reading from the N-terminus, the 231-residue chain is Chromosome partition protein MukE (231 aa).

Residues 204-231 (TPEPSQQSLLENPTAEYDEEQTEWEDEA) form a disordered region. Over residues 219–231 (EYDEEQTEWEDEA) the composition is skewed to acidic residues.

The protein belongs to the MukE family. In terms of assembly, interacts, and probably forms a ternary complex, with MukF and MukB. The complex formation is stimulated by calcium or magnesium.

Its subcellular location is the cytoplasm. It is found in the nucleoid. Functionally, involved in chromosome condensation, segregation and cell cycle progression. May participate in facilitating chromosome segregation by condensation DNA from both sides of a centrally located replisome during cell division. Probably acts via its interaction with MukB and MukF. The sequence is that of Chromosome partition protein MukE from Vibrio cholerae serotype O1 (strain ATCC 39315 / El Tor Inaba N16961).